Consider the following 473-residue polypeptide: Chromosomal replication initiator protein DnaA (473 aa).

Residues 1–76 (MNYHSTNVNE…RTVLGRVIGP (76 aa)) form a domain I, interacts with DnaA modulators region. The tract at residues 76 to 135 (PNASLQYNALVDNSSPKYPGTVTLAGCADGGQAAEQFDVNLLHRHMPNAATHSEAQDFDT) is domain II. A domain III, AAA+ region region spans residues 136–353 (QLNSRLNFRN…GTLVSLITNS (218 aa)). ATP is bound by residues G181, G183, K184, and T185. Residues 354-473 (VVVGKEIDLT…VERAEQLIAN (120 aa)) are domain IV, binds dsDNA.

The protein belongs to the DnaA family. Oligomerizes as a right-handed, spiral filament on DNA at oriC.

The protein resides in the cytoplasm. Functionally, plays an essential role in the initiation and regulation of chromosomal replication. ATP-DnaA binds to the origin of replication (oriC) to initiate formation of the DNA replication initiation complex once per cell cycle. Binds the DnaA box (a 9 base pair repeat at the origin) and separates the double-stranded (ds)DNA. Forms a right-handed helical filament on oriC DNA; dsDNA binds to the exterior of the filament while single-stranded (ss)DNA is stabiized in the filament's interior. The ATP-DnaA-oriC complex binds and stabilizes one strand of the AT-rich DNA unwinding element (DUE), permitting loading of DNA polymerase. After initiation quickly degrades to an ADP-DnaA complex that is not apt for DNA replication. Binds acidic phospholipids. This Porphyromonas gingivalis (strain ATCC 33277 / DSM 20709 / CIP 103683 / JCM 12257 / NCTC 11834 / 2561) protein is Chromosomal replication initiator protein DnaA.